The following is a 312-amino-acid chain: Transcription initiation factor IIB-2 (312 aa).

Residues 2–34 (SDAFCSDCKRHTEVVFDHSAGDTVCSECGLVLE) form a TFIIB-type zinc finger. 4 residues coordinate Zn(2+): Cys6, Cys9, Cys26, and Cys29. 2 repeat units span residues 115–192 (MADR…YIVK) and 216–290 (FCSN…DLYP).

This sequence belongs to the TFIIB family. As to quaternary structure, associates with TFIID-IIA (DA complex) to form TFIID-IIA-IIB (DAB-complex) which is then recognized by polymerase II.

It is found in the nucleus. Functionally, general factor that plays a major role in the activation of eukaryotic genes transcribed by RNA polymerase II. The sequence is that of Transcription initiation factor IIB-2 (TFIIB2) from Arabidopsis thaliana (Mouse-ear cress).